We begin with the raw amino-acid sequence, 96 residues long: ESAT-6-like protein SAG1039 (96 aa).

Belongs to the WXG100 family. sagEsxA-like subfamily. In terms of assembly, homodimer.

The chain is ESAT-6-like protein SAG1039 from Streptococcus agalactiae serotype V (strain ATCC BAA-611 / 2603 V/R).